The sequence spans 436 residues: MPNVVVIGAQWGDEGKGKVVDLLTEHAQVVVRFQGGNNAGHTLVVGGQKTVLHLIPSGILHPGKTCVIGNGVVVDPAVLVGEIDALKVRGFLKDDAQLLISDNAHVIFPWHKLLDSFREKARGGSAIGTTGRGIGPAYEDKVARRGIRVRDLLNADRLRTRIEARLPAALDELKDLCAQAGDPVPQLEVPQILAEFTGLGERLKPFVHDASLYLSGQVRRGARILFEGAQGTLLDVDHGTYPFVTSSNCVAGNAAVGSGLGPTAIDKVMGISKAYTTRVGGGPFPTELHDAIGDQLRKMGDEFGTTTGRPRRCGWLDGVVLRYASRVNGLWGMALTKLDVLSGLKTLQICTAYELDGQKVMELPGDYEDLARVKPIYETLQGWDEQIAGVRTFDELPENAKRYVRRVEEVSGVPVVCVSVGADRGETVLLQNPFRS.

GTP-binding positions include 12-18 (GDEGKGK) and 40-42 (GHT). Asp13 acts as the Proton acceptor in catalysis. Mg(2+) contacts are provided by Asp13 and Gly40. IMP is bound by residues 13 to 16 (DEGK), 38 to 41 (NAGH), Thr130, Arg144, Gln230, Thr245, and Arg309. The active-site Proton donor is the His41. Residue 305 to 311 (TTTGRPR) participates in substrate binding. Residues Arg311, 337–339 (KLD), and 419–421 (SVG) each bind GTP.

It belongs to the adenylosuccinate synthetase family. As to quaternary structure, homodimer. Requires Mg(2+) as cofactor.

Its subcellular location is the cytoplasm. The catalysed reaction is IMP + L-aspartate + GTP = N(6)-(1,2-dicarboxyethyl)-AMP + GDP + phosphate + 2 H(+). It participates in purine metabolism; AMP biosynthesis via de novo pathway; AMP from IMP: step 1/2. Functionally, plays an important role in the de novo pathway of purine nucleotide biosynthesis. Catalyzes the first committed step in the biosynthesis of AMP from IMP. This Myxococcus xanthus (strain DK1622) protein is Adenylosuccinate synthetase.